A 57-amino-acid polypeptide reads, in one-letter code: UPF0391 membrane protein XC_2938 (57 aa).

2 helical membrane passes run 4–24 (WAIIFAIIGLIAGALGFGGMA) and 33–53 (FLFWAGIIIAIVLFVLGMTIA).

This sequence belongs to the UPF0391 family.

Its subcellular location is the cell membrane. In Xanthomonas campestris pv. campestris (strain 8004), this protein is UPF0391 membrane protein XC_2938.